The following is a 25-amino-acid chain: MREKWKKKRSRRLRRKRRKMRARSK.

The interval 1-25 is disordered; that stretch reads MREKWKKKRSRRLRRKRRKMRARSK.

Belongs to the eukaryotic ribosomal protein eS32 family. Component of the large ribosomal subunit.

The polypeptide is Small ribosomal subunit protein eS32 (rpl41) (Agaricus bisporus (White button mushroom)).